The primary structure comprises 266 residues: Diphthine synthase (266 aa).

Residues Leu9, Asp84, Val87, 112-113 (SI), Leu169, Ala210, and His235 each bind S-adenosyl-L-methionine.

It belongs to the diphthine synthase family. In terms of assembly, homodimer.

The catalysed reaction is 2-[(3S)-amino-3-carboxypropyl]-L-histidyl-[translation elongation factor 2] + 3 S-adenosyl-L-methionine = diphthine-[translation elongation factor 2] + 3 S-adenosyl-L-homocysteine + 3 H(+). The protein operates within protein modification; peptidyl-diphthamide biosynthesis. S-adenosyl-L-methionine-dependent methyltransferase that catalyzes the trimethylation of the amino group of the modified target histidine residue in translation elongation factor 2 (EF-2), to form an intermediate called diphthine. The three successive methylation reactions represent the second step of diphthamide biosynthesis. This chain is Diphthine synthase, found in Methanosarcina barkeri (strain Fusaro / DSM 804).